The chain runs to 355 residues: MIEQIKEVYENGFTIYRDGEVEKRELCWNDELCVGCGICADICPVNAIAMGPLGAIAKGDIIAPKLDIDKDVCVLCGMCASACPFDALDLKINGKSIKEDERYPKIKRDIKVYQDKCVLCEQCEMVCPQGAIVVERELAEREKFVIGEININKEKCVLCGICAEYCPADAINLKYNYPTPSNPKPITDIEVDKDKCVFCKVCEFVCPHDAIEVICYKCPMMKRIPQAKLYEDITGKTVIDKDACVTCGWCAFICPAEAIEVEKPFKGELIIDVNACNACGACISICPCSALEFPKPKDKAEKVPRIIVNQNLCVLCGACAKACPVNAIKVKRTEINFEREPKAIAWKEAFKKLMG.

4Fe-4S ferredoxin-type domains lie at 24 to 53, 64 to 93, 108 to 137, 147 to 176, 187 to 216, 235 to 264, 267 to 296, and 304 to 333; these read RELC…MGPL, PKLD…LKIN, RDIK…VERE, GEIN…LKYN, TDIE…VICY, GKTV…VEKP, GELI…FPKP, and PRII…VKRT. Residues Cys-33, Cys-36, Cys-39, Cys-43, Cys-73, Cys-76, Cys-79, Cys-83, Cys-117, Cys-120, Cys-123, Cys-127, Cys-156, Cys-159, Cys-162, Cys-166, Cys-196, Cys-199, Cys-202, Cys-206, Cys-244, Cys-247, Cys-250, Cys-254, Cys-276, Cys-279, Cys-282, Cys-286, Cys-313, Cys-316, Cys-319, and Cys-323 each coordinate [4Fe-4S] cluster.

The cofactor is [4Fe-4S] cluster.

The chain is Polyferredoxin protein FwdF (fwdF) from Methanocaldococcus jannaschii (strain ATCC 43067 / DSM 2661 / JAL-1 / JCM 10045 / NBRC 100440) (Methanococcus jannaschii).